The following is a 471-amino-acid chain: Glutamate--tRNA ligase (471 aa).

The short motif at 9–19 is the 'HIGH' region element; that stretch reads PSPTGYLHVGG. The Zn(2+) site is built by Cys-98, Cys-100, Cys-125, and His-127. The 'KMSKS' region motif lies at 237 to 241; sequence KLSKR. Lys-240 lines the ATP pocket.

It belongs to the class-I aminoacyl-tRNA synthetase family. Glutamate--tRNA ligase type 1 subfamily. Monomer. Zn(2+) serves as cofactor.

The protein resides in the cytoplasm. The catalysed reaction is tRNA(Glu) + L-glutamate + ATP = L-glutamyl-tRNA(Glu) + AMP + diphosphate. In terms of biological role, catalyzes the attachment of glutamate to tRNA(Glu) in a two-step reaction: glutamate is first activated by ATP to form Glu-AMP and then transferred to the acceptor end of tRNA(Glu). This chain is Glutamate--tRNA ligase, found in Salmonella schwarzengrund (strain CVM19633).